The primary structure comprises 459 residues: Ribulose bisphosphate carboxylase (459 aa).

Residue asparagine 111 coordinates substrate. The Proton acceptor role is filled by lysine 166. Position 168 (lysine 168) interacts with substrate. Mg(2+)-binding residues include lysine 191, aspartate 193, and glutamate 194. Lysine 191 bears the N6-carboxylysine mark. Histidine 287 (proton acceptor) is an active-site residue. Residues arginine 288, histidine 321, and serine 368 each coordinate substrate.

This sequence belongs to the RuBisCO large chain family. Type II subfamily. In terms of assembly, homodimer. Requires Mg(2+) as cofactor.

The enzyme catalyses 2 (2R)-3-phosphoglycerate + 2 H(+) = D-ribulose 1,5-bisphosphate + CO2 + H2O. The catalysed reaction is D-ribulose 1,5-bisphosphate + O2 = 2-phosphoglycolate + (2R)-3-phosphoglycerate + 2 H(+). Functionally, ruBisCO catalyzes two reactions: the carboxylation of D-ribulose 1,5-bisphosphate, the primary event in carbon dioxide fixation, as well as the oxidative fragmentation of the pentose substrate. Both reactions occur simultaneously and in competition at the same active site. This is Ribulose bisphosphate carboxylase from Dechloromonas aromatica (strain RCB).